A 273-amino-acid polypeptide reads, in one-letter code: Undecaprenyl-diphosphatase (273 aa).

7 helical membrane-spanning segments follow: residues 6–26, 45–65, 90–110, 116–136, 190–210, 222–242, and 252–272; these read SLLI…LPVS, AKTF…VMFW, LTLI…LVFH, LFNP…LIAA, YAAS…ATVL, ADIP…LIAI, and ISFI…YVVF.

This sequence belongs to the UppP family.

Its subcellular location is the cell inner membrane. The catalysed reaction is di-trans,octa-cis-undecaprenyl diphosphate + H2O = di-trans,octa-cis-undecaprenyl phosphate + phosphate + H(+). Functionally, catalyzes the dephosphorylation of undecaprenyl diphosphate (UPP). Confers resistance to bacitracin. The protein is Undecaprenyl-diphosphatase of Salmonella arizonae (strain ATCC BAA-731 / CDC346-86 / RSK2980).